Here is a 311-residue protein sequence, read N- to C-terminus: Mitoferrin (311 aa).

3 Solcar repeats span residues 15 to 102 (HSIP…MKSF), 111 to 195 (EHTL…WQQV), and 202 to 302 (YDPK…FKFM). 6 consecutive transmembrane segments (helical) span residues 17–36 (IPVH…CVMF), 77–96 (GVNA…FTVY), 112–132 (HTLA…AVMN), 170–189 (SYTT…FMGY), 204–223 (PKSH…AVTT), and 277–296 (GLQA…WSVY).

It belongs to the mitochondrial carrier (TC 2.A.29) family.

It is found in the mitochondrion inner membrane. Functionally, mitochondrial iron transporter that mediates iron uptake. Probably required for heme synthesis of hemoproteins and Fe-S cluster assembly. This Caenorhabditis briggsae protein is Mitoferrin.